The chain runs to 104 residues: Nucleoid-associated protein PEPE_1483 (104 aa).

The disordered stretch occupies residues 1 to 35 (MRGGMGNMQSMMRQMQKMQKKVTEEQEKLNQTEFT). Residues 8–17 (MQSMMRQMQK) show a composition bias toward low complexity. The segment covering 21-30 (KVTEEQEKLN) has biased composition (basic and acidic residues).

It belongs to the YbaB/EbfC family. As to quaternary structure, homodimer.

It is found in the cytoplasm. The protein resides in the nucleoid. In terms of biological role, binds to DNA and alters its conformation. May be involved in regulation of gene expression, nucleoid organization and DNA protection. The chain is Nucleoid-associated protein PEPE_1483 from Pediococcus pentosaceus (strain ATCC 25745 / CCUG 21536 / LMG 10740 / 183-1w).